We begin with the raw amino-acid sequence, 465 residues long: UDP-N-acetylmuramate--L-alanine ligase (465 aa).

Gly-115 to Thr-121 lines the ATP pocket.

This sequence belongs to the MurCDEF family.

The protein resides in the cytoplasm. It catalyses the reaction UDP-N-acetyl-alpha-D-muramate + L-alanine + ATP = UDP-N-acetyl-alpha-D-muramoyl-L-alanine + ADP + phosphate + H(+). The protein operates within cell wall biogenesis; peptidoglycan biosynthesis. Cell wall formation. The sequence is that of UDP-N-acetylmuramate--L-alanine ligase from Renibacterium salmoninarum (strain ATCC 33209 / DSM 20767 / JCM 11484 / NBRC 15589 / NCIMB 2235).